Here is a 227-residue protein sequence, read N- to C-terminus: Cytidylate kinase (227 aa).

7–15 (GPSGAGKGT) serves as a coordination point for ATP.

The protein belongs to the cytidylate kinase family. Type 1 subfamily.

The protein localises to the cytoplasm. The catalysed reaction is CMP + ATP = CDP + ADP. It catalyses the reaction dCMP + ATP = dCDP + ADP. The polypeptide is Cytidylate kinase (Actinobacillus succinogenes (strain ATCC 55618 / DSM 22257 / CCUG 43843 / 130Z)).